The following is a 719-amino-acid chain: Protein psiJ (719 aa).

An N-terminal signal peptide occupies residues Met-1–Gly-21. Residues Asp-22–Gly-653 lie on the Extracellular side of the membrane. 10 N-linked (GlcNAc...) asparagine glycosylation sites follow: Asn-46, Asn-59, Asn-86, Asn-113, Asn-301, Asn-372, Asn-435, Asn-457, Asn-562, and Asn-628. The PA14 domain occupies Gln-112–Thr-260. Residues Val-654–Ala-674 form a helical membrane-spanning segment. Residues Leu-675 to Thr-719 lie on the Cytoplasmic side of the membrane.

Belongs to the prespore-cell-inducing factor family.

Its subcellular location is the membrane. This Dictyostelium discoideum (Social amoeba) protein is Protein psiJ (psiJ).